Reading from the N-terminus, the 124-residue chain is Small ribosomal subunit protein uS12 (124 aa).

D89 carries the 3-methylthioaspartic acid modification.

The protein belongs to the universal ribosomal protein uS12 family. Part of the 30S ribosomal subunit. Contacts proteins S8 and S17. May interact with IF1 in the 30S initiation complex.

In terms of biological role, with S4 and S5 plays an important role in translational accuracy. Functionally, interacts with and stabilizes bases of the 16S rRNA that are involved in tRNA selection in the A site and with the mRNA backbone. Located at the interface of the 30S and 50S subunits, it traverses the body of the 30S subunit contacting proteins on the other side and probably holding the rRNA structure together. The combined cluster of proteins S8, S12 and S17 appears to hold together the shoulder and platform of the 30S subunit. This chain is Small ribosomal subunit protein uS12, found in Nitratiruptor sp. (strain SB155-2).